The chain runs to 114 residues: Ribonuclease P protein component (114 aa).

It belongs to the RnpA family. As to quaternary structure, consists of a catalytic RNA component (M1 or rnpB) and a protein subunit.

It catalyses the reaction Endonucleolytic cleavage of RNA, removing 5'-extranucleotides from tRNA precursor.. Its function is as follows. RNaseP catalyzes the removal of the 5'-leader sequence from pre-tRNA to produce the mature 5'-terminus. It can also cleave other RNA substrates such as 4.5S RNA. The protein component plays an auxiliary but essential role in vivo by binding to the 5'-leader sequence and broadening the substrate specificity of the ribozyme. This Limosilactobacillus fermentum (strain NBRC 3956 / LMG 18251) (Lactobacillus fermentum) protein is Ribonuclease P protein component.